A 291-amino-acid polypeptide reads, in one-letter code: Ribosomal RNA small subunit methyltransferase H (291 aa).

Residues 31-33, D49, F76, D97, and Q104 contribute to the S-adenosyl-L-methionine site; that span reads GGY.

It belongs to the methyltransferase superfamily. RsmH family.

It localises to the cytoplasm. The enzyme catalyses cytidine(1402) in 16S rRNA + S-adenosyl-L-methionine = N(4)-methylcytidine(1402) in 16S rRNA + S-adenosyl-L-homocysteine + H(+). Specifically methylates the N4 position of cytidine in position 1402 (C1402) of 16S rRNA. The polypeptide is Ribosomal RNA small subunit methyltransferase H (Anaplasma marginale (strain St. Maries)).